The sequence spans 66 residues: ATP synthase protein 8 (66 aa).

The helical transmembrane segment at proline 8–threonine 24 threads the bilayer. Lysine 54 carries the N6-acetyllysine; alternate modification. Lysine 54 is subject to N6-succinyllysine; alternate. The residue at position 57 (lysine 57) is an N6-acetyllysine.

Belongs to the ATPase protein 8 family. As to quaternary structure, F-type ATPases have 2 components, CF(1) - the catalytic core - and CF(0) - the membrane proton channel. Component of an ATP synthase complex composed of ATP5PB, ATP5MC1, ATP5F1E, ATP5PD, ATP5ME, ATP5PF, ATP5MF, MT-ATP6, MT-ATP8, ATP5F1A, ATP5F1B, ATP5F1D, ATP5F1C, ATP5PO, ATP5MG, ATP5MK and ATP5MJ. Interacts with PRICKLE3.

It localises to the mitochondrion membrane. Mitochondrial membrane ATP synthase (F(1)F(0) ATP synthase or Complex V) produces ATP from ADP in the presence of a proton gradient across the membrane which is generated by electron transport complexes of the respiratory chain. F-type ATPases consist of two structural domains, F(1) - containing the extramembraneous catalytic core and F(0) - containing the membrane proton channel, linked together by a central stalk and a peripheral stalk. During catalysis, ATP synthesis in the catalytic domain of F(1) is coupled via a rotary mechanism of the central stalk subunits to proton translocation. Part of the complex F(0) domain. Minor subunit located with subunit a in the membrane. This is ATP synthase protein 8 (MT-ATP8) from Alouatta guariba (Brown howler monkey).